A 635-amino-acid chain; its full sequence is Transcription termination factor FttA (635 aa).

2 KHa regions span residues 1-69 (MSAE…PSVL) and 4-69 (EDIL…PSVL). The segment at 70–137 (VEPDIAKDKI…WAPKPVRTPP (68 aa)) is KHb. Metallo-beta-lactamase N-terminus regions lie at residues 179–382 (WVRT…YGGY) and 179–383 (WVRT…GGYD). Beta-Casp stretches follow at residues 180–577 (VRTS…GFSG) and 383–576 (DDVL…EGFS). Positions 241, 243, 245, 246, 328, and 351 each coordinate Zn(2+). Metallo-beta-lactamase C-terminus regions lie at residues 577-635 (GHSD…IRLR) and 578-635 (HSDR…IRLR). His602 is a binding site for Zn(2+).

This sequence belongs to the metallo-beta-lactamase superfamily. RNA-metabolizing metallo-beta-lactamase-like family. FttA subfamily. Homodimer. Interacts with RNA polymerase (RNAP); interaction is not dependent on DNA or RNA. Interacts with the Spt4-Spt5 complex. The cofactor is Zn(2+).

It is found in the chromosome. In terms of biological role, terminates transcription on the whole genome. Termination is linked to FttA-mediated RNA cleavage and does not require NTP hydrolysis. Cleaves endonucleolytically at the RNA exit channel of RNA polymerase (RNAP); the 5'-3' exonuclease activity of this protein degrades the nascent RNA released from RNAP. Functionally, terminates transcription genome-wide. Transcription termination is most effective in vivo on RNAs with more than one U4-tract in their 3'-ends (including non-protein coding RNAs); U4-tracts are recognized by this protein. Also plays a role in termination of RNAs without U-tracts by an unknown mechanism. Has endonuclease activity after U-rich tracts in transcription termination sites. Binds RNA at U4-tracts found directly upstream of the experimentally determined transcription termination sites; binds preferentially to RNAs with more U4-tracts at their 3'-ends. The sequence is that of Transcription termination factor FttA from Methanococcus maripaludis (strain DSM 14266 / JCM 13030 / NBRC 101832 / S2 / LL).